Consider the following 90-residue polypeptide: U7-theraphotoxin-Hhn1a 3 (90 aa).

Residues 1 to 26 (MKTAIFTVVLALAVFAVLSFGWEANG) form the signal peptide. The propeptide occupies 27–50 (KALSEEFTELIHEKEAASETEARE). Disulfide bonds link C51–C65, C58–C70, and C64–C81.

The protein belongs to the neurotoxin 10 (Hwtx-1) family. 13 (Hntx-13) subfamily. As to expression, expressed by the venom gland.

Its subcellular location is the secreted. Functionally, ion channel inhibitor. This is U7-theraphotoxin-Hhn1a 3 from Cyriopagopus hainanus (Chinese bird spider).